We begin with the raw amino-acid sequence, 604 residues long: Kelch-like protein 15 (604 aa).

In terms of domain architecture, BTB spans 31 to 98 (LDVTLLIEEH…MYYGSLELSM (68 aa)). The BACK domain maps to 133-237 (CAEVMRLLED…TPANIFEKVK (105 aa)). Kelch repeat units follow at residues 328–379 (FAFL…VIGK), 381–426 (IYAV…VLNG), 428–473 (LYIT…NKSK), 489–542 (KLYV…VLDK), and 544–592 (IMVL…SLHF).

Its subcellular location is the nucleus. It participates in protein modification; protein ubiquitination. Substrate-specific adapter for an E3 ubiquitin-protein ligase complex. The protein is Kelch-like protein 15 (klhl15) of Danio rerio (Zebrafish).